The primary structure comprises 286 residues: Elongation factor Ts (286 aa).

An involved in Mg(2+) ion dislocation from EF-Tu region spans residues 82 to 85 (TDFV).

Belongs to the EF-Ts family.

It localises to the cytoplasm. Functionally, associates with the EF-Tu.GDP complex and induces the exchange of GDP to GTP. It remains bound to the aminoacyl-tRNA.EF-Tu.GTP complex up to the GTP hydrolysis stage on the ribosome. The polypeptide is Elongation factor Ts (Hahella chejuensis (strain KCTC 2396)).